Consider the following 270-residue polypeptide: Bacterial microcompartment shell protein PduB (270 aa).

The segment at 6-18 (LVEQIMAQVIARV) is probable helix that binds cargo to the BMC shell. BMC circularly permuted domains follow at residues 47 to 152 (EFVG…DRTF) and 154 to 258 (DVYG…LATL).

Belongs to the EutL/PduB family. In terms of assembly, homotrimerizes to form a pseudohexamer with a central pore. The trimers pack into an array. In purified BMCs seen as a 28.0 kDa and 25.0 kDa form, both of which have been N-terminally sequenced and whose N-fMet is removed; the smaller form is called PduB'.

The protein localises to the bacterial microcompartment. It functions in the pathway polyol metabolism; 1,2-propanediol degradation. The two proteins produced are among the major shell proteins of the bacterial microcompartment (BMC) dedicated to 1,2-propanediol (1,2-PD) degradation. Required for structural integrity of BMCs and to mitigate propionaldehyde toxicity. The N-terminal 13 residues are important for correct assembly of the BMC shell. The isolated BMC shell component protein ratio for J:A:B':B:K:T:U is approximately 15:10:7:6:1:1:2. The N-terminus of the long form (PduB) is required for correct formation of BMCs, deletions in the first 37 residues have substantially reduced levels of the major lumen enzymes. May play a major role in binding the enzyme contents to the shell. Its function is as follows. The 1,2-PD-specific bacterial microcompartment (BMC) concentrates low levels of 1,2-PD catabolic enzymes, concentrates volatile reaction intermediates thus enhancing pathway flux and keeps the level of toxic, mutagenic propionaldehyde low. This Salmonella typhimurium (strain LT2 / SGSC1412 / ATCC 700720) protein is Bacterial microcompartment shell protein PduB.